Consider the following 419-residue polypeptide: MPLSDFILALKDNPYFGAGFGLVGVGTALALARKGVQLGLVAFRRHYMITLEVPARDRSYAWLLSWLTRHSTRTQHLSVETSYLQHESGRISTKFEFVPSPGNHFIWYRGKWIRVERSREMQMIDLQTGTPWESVTFTALGTDRKVFFNILEEARELALQQEEGKTVMYTAVGSEWRPFGYPRRRRPLNSVVLQQGLADRIVRDVQEFIDNPKWYTDRGIPYRRGYLLYGPPGCGKSSFITALAGELEHSICLLSLTDSSLSDDRLNHLLSVAPQQSLVLLEDVDAAFLSRDLAVENPVKYQGLGRLTFSGLLNALDGVASTEARIVFMTTNHVDRLDPALIRPGRVDLKEYVGYCSHWQLTQMFQRFYPGQAPSLAENFAEHVLRATNQISPAQVQGYFMLYKNDPVGAIHNAESLRR.

At 2 to 15 (PLSDFILALKDNPY) the chain is on the mitochondrial intermembrane side. The chain crosses the membrane as a helical span at residues 16–32 (FGAGFGLVGVGTALALA). Residues 33–419 (RKGVQLGLVA…AIHNAESLRR (387 aa)) lie on the Mitochondrial matrix side of the membrane. The residue at position 181 (Tyr-181) is a Phosphotyrosine. ATP is bound at residue 230 to 237 (GPPGCGKS).

Belongs to the AAA ATPase family. BCS1 subfamily. In terms of assembly, interacts with LETM1. Ubiquitous.

The protein localises to the mitochondrion inner membrane. The catalysed reaction is ATP + H2O = ADP + phosphate + H(+). Chaperone necessary for the incorporation of Rieske iron-sulfur protein UQCRFS1 into the mitochondrial respiratory chain complex III. Plays an important role in the maintenance of mitochondrial tubular networks, respiratory chain assembly and formation of the LETM1 complex. The chain is Mitochondrial chaperone BCS1 (BCS1L) from Homo sapiens (Human).